The primary structure comprises 254 residues: MPQQIELRNIALQAAQPLVHGVSLTLQRGRVLALVGGSGSGKSLTCAATLGILPAGVRQTAGEILADGKAVYPCALRGIKIATIMQNPRSAFNPLHTMHTHARETCLALGKPADDATLTAAIEAVGLENAARVLKLYPFEMSGGMLQRMMIAMAVLCESPFIIADEPTTDLDVVAQARILDLLESIMQKQAPGMLLVTHDMGVVARLADDVAVMSQGKIVEQGDVETLFNAPKHAVTRSLVSAHLALYGMELAS.

In terms of domain architecture, ABC transporter spans 2 to 241 (PQQIELRNIA…PKHAVTRSLV (240 aa)). 36-43 (GGSGSGKS) is a binding site for ATP.

The protein belongs to the ABC transporter superfamily. Nickel importer (TC 3.A.1.5.3) family. In terms of assembly, the complex is composed of two ATP-binding proteins (NikD and NikE), two transmembrane proteins (NikB and NikC) and a solute-binding protein (NikA).

It localises to the cell inner membrane. It carries out the reaction Ni(2+)(out) + ATP + H2O = Ni(2+)(in) + ADP + phosphate + H(+). In terms of biological role, part of the ABC transporter complex NikABCDE involved in nickel import. Responsible for energy coupling to the transport system. The protein is Nickel import ATP-binding protein NikD of Shigella sonnei (strain Ss046).